A 138-amino-acid chain; its full sequence is U1 small nuclear ribonucleoprotein C (138 aa).

The segment at 4–36 (YYCDYCDTFLTHDSPSVRKTHNNGRKHKENVRF) adopts a Matrin-type zinc-finger fold. A disordered region spans residues 58-138 (QSKPNSQMPP…MGRPPMSLRS (81 aa)). Pro residues predominate over residues 67–109 (PNAPPGLMPPPGMLPPPGGMPPGRMPPQGLPFPPPGPIPPPPG). The segment covering 113 to 138 (MRPPHGQMHMGGPRPQMGRPPMSLRS) has biased composition (low complexity).

This sequence belongs to the U1 small nuclear ribonucleoprotein C family. In terms of assembly, U1 snRNP is composed of the 7 core Sm proteins B/B', D1, D2, D3, E, F and G that assemble in a heptameric protein ring on the Sm site of the small nuclear RNA to form the core snRNP, and at least 3 U1 snRNP-specific proteins U1-70K, U1-A and U1-C. U1-C interacts with U1 snRNA and the 5' splice-site region of the pre-mRNA.

It is found in the nucleus. Component of the spliceosomal U1 snRNP, which is essential for recognition of the pre-mRNA 5' splice-site and the subsequent assembly of the spliceosome. U1-C is directly involved in initial 5' splice-site recognition for both constitutive and regulated alternative splicing. The interaction with the 5' splice-site seems to precede base-pairing between the pre-mRNA and the U1 snRNA. Stimulates commitment or early (E) complex formation by stabilizing the base pairing of the 5' end of the U1 snRNA and the 5' splice-site region. The chain is U1 small nuclear ribonucleoprotein C from Nematostella vectensis (Starlet sea anemone).